The chain runs to 307 residues: Ribosomal RNA large subunit methyltransferase F (307 aa).

This sequence belongs to the methyltransferase superfamily. METTL16/RlmF family.

It localises to the cytoplasm. It carries out the reaction adenosine(1618) in 23S rRNA + S-adenosyl-L-methionine = N(6)-methyladenosine(1618) in 23S rRNA + S-adenosyl-L-homocysteine + H(+). Specifically methylates the adenine in position 1618 of 23S rRNA. The polypeptide is Ribosomal RNA large subunit methyltransferase F (Bacteroides thetaiotaomicron (strain ATCC 29148 / DSM 2079 / JCM 5827 / CCUG 10774 / NCTC 10582 / VPI-5482 / E50)).